Consider the following 345-residue polypeptide: UPF0324 membrane protein RB0971 (345 aa).

The next 10 membrane-spanning stretches (helical) occupy residues 13 to 32, 42 to 61, 93 to 115, 130 to 152, 161 to 183, 193 to 215, 228 to 247, 262 to 284, 291 to 310, and 320 to 342; these read SLSV…AAVA, YGAP…HFLA, LLIG…TILF, ALLT…AAVL, NLIF…YPIV, ATGI…GFSV, LIRV…VLRS, VPGF…VPVL, AISR…KTSL, and AVAL…MYYL.

The protein belongs to the UPF0324 family.

The protein localises to the cell membrane. The sequence is that of UPF0324 membrane protein RB0971 from Rhizobium meliloti (strain 1021) (Ensifer meliloti).